We begin with the raw amino-acid sequence, 502 residues long: L-arabinose isomerase (502 aa).

Mn(2+)-binding residues include Glu-307, Glu-334, His-351, and His-450.

It belongs to the arabinose isomerase family. It depends on Mn(2+) as a cofactor.

It catalyses the reaction beta-L-arabinopyranose = L-ribulose. Its pathway is carbohydrate degradation; L-arabinose degradation via L-ribulose; D-xylulose 5-phosphate from L-arabinose (bacterial route): step 1/3. Functionally, catalyzes the conversion of L-arabinose to L-ribulose. This Nocardioides sp. (strain ATCC BAA-499 / JS614) protein is L-arabinose isomerase.